A 389-amino-acid polypeptide reads, in one-letter code: Aspartic protease pepA (389 aa).

An N-terminal signal peptide occupies residues 1-20 (MVLINQLGAVLAVCATLTVA). The propeptide at 21–67 (APTKGKARFNVPQVAIPKKMVHHPAVSYARALHKFGMKVPKTVQDAA) is activation peptide. The Peptidase A1 domain maps to 82–386 (YVTQVTVGEG…DTQGPRIGFA (305 aa)). Asp-98 is a catalytic residue. The N-linked (GlcNAc...) asparagine glycan is linked to Asn-257. The active site involves Asp-279. The cysteines at positions 315 and 348 are disulfide-linked.

It belongs to the peptidase A1 family. As to quaternary structure, monomer.

It localises to the secreted. Functionally, secreted aspartic endopeptidase that allows assimilation of proteinaceous substrates. The scissile peptide bond is attacked by a nucleophilic water molecule activated by two aspartic residues in the active site. Shows a broad primary substrate specificity. Favors hydrophobic residues at the P1 and P1' positions. This chain is Aspartic protease pepA, found in Arthroderma otae (strain ATCC MYA-4605 / CBS 113480) (Microsporum canis).